Reading from the N-terminus, the 702-residue chain is MSRTTPICQYRNIGISAHIDAGKTTTTERILFYTGINHKIGEVHDGAATMDWMEQEQERGITITSAATTAFWSGMAKQFKPHRINIIDTPGHVDFTIEVERSMRVLDGAVMVYCAVGGVQPQSETVWRQANKYNVPRIAFINKMDRMGANFLRSVKQIKTRLGGNPVPLQLPIGSEENFKGVIDLIKMKAIKWKDIDQGITFTYDEIPSDMIELSEKWHQNLIESAVESNEELMEKYLSGFVLSEKEIKSELRKRSLNNEITLITCGSAFKNKGVQALLDAIIEYLPAPNDIQDIKGITNDKASTVAFRSSNDKAPFSALAFKIASDPFVGNLTFFRVYSGIVKSGDSVLNSVKSQRERFGRIVQMHANKREEIKEVYAGDIAAAIGLKDVTTGDTLCDLNQPIILERMEFPEPVISISVEPKTKADQEKMGLALARLAKEDPSFRVRTDQESNQTIISGMGELHLEIIVDRMKREFSVDANVGKPQVAYRETILNKVTDIEGKHIKQSGGRGQYGHVVIELFPLESGGKGYLFVNDIKGGVIPNEYISAIDKGIQEQLKYGPLAGYPVVDIGVRLYFGSYHDVDSSELAFKLAASLAFKNGFKKAKPILLEPIMKVEVETPDDYMGDVIGDLNRRRGIIEGMKDLEIGKIINACVPLSEMFGYATDLRSQTQGRASYSMEFLKYVEAPSVISDLIIQKRER.

The tr-type G domain maps to 8-290 (CQYRNIGISA…AIIEYLPAPN (283 aa)). GTP-binding positions include 17–24 (AHIDAGKT), 88–92 (DTPGH), and 142–145 (NKMD).

The protein belongs to the TRAFAC class translation factor GTPase superfamily. Classic translation factor GTPase family. EF-G/EF-2 subfamily.

The protein localises to the cytoplasm. Catalyzes the GTP-dependent ribosomal translocation step during translation elongation. During this step, the ribosome changes from the pre-translocational (PRE) to the post-translocational (POST) state as the newly formed A-site-bound peptidyl-tRNA and P-site-bound deacylated tRNA move to the P and E sites, respectively. Catalyzes the coordinated movement of the two tRNA molecules, the mRNA and conformational changes in the ribosome. This Buchnera aphidicola subsp. Schizaphis graminum (strain Sg) protein is Elongation factor G.